We begin with the raw amino-acid sequence, 397 residues long: Lysophospholipid transporter LplT (397 aa).

The Periplasmic portion of the chain corresponds to Met1–Lys17. The chain crosses the membrane as a helical span at residues Ala18–Leu38. At Ala39–Pro52 the chain is on the cytoplasmic side. The chain crosses the membrane as a helical span at residues Ile53–Ala73. Over Asp74–Leu90 the chain is Periplasmic. The helical transmembrane segment at Leu91–Val111 threads the bilayer. Over Gly112 to Thr144 the chain is Cytoplasmic. Residues Ile145–Val165 form a helical membrane-spanning segment. Position 166 (Ala166) is a topological domain, periplasmic. Residues Leu167 to Leu187 form a helical membrane-spanning segment. Residues Ala188–Ser226 lie on the Cytoplasmic side of the membrane. Residues Leu227–Leu247 form a helical membrane-spanning segment. Over Gly248 to Thr256 the chain is Periplasmic. The helical transmembrane segment at Tyr257 to Val277 threads the bilayer. Over Thr278–Glu280 the chain is Cytoplasmic. Residues Thr281–Leu301 traverse the membrane as a helical segment. Over Gln302 to Glu304 the chain is Periplasmic. A helical transmembrane segment spans residues Leu305–Pro325. Topologically, residues Leu326 to Ala343 are cytoplasmic. Residues Ile344–Leu364 form a helical membrane-spanning segment. At Ala365–Val366 the chain is on the periplasmic side. Residues Met367–Ile387 traverse the membrane as a helical segment. Residues Thr388–His397 lie on the Cytoplasmic side of the membrane.

This sequence belongs to the major facilitator superfamily. LplT (TC 2.A.1.42) family.

It is found in the cell inner membrane. Functionally, catalyzes the facilitated diffusion of 2-acyl-glycero-3-phosphoethanolamine (2-acyl-GPE) into the cell. The protein is Lysophospholipid transporter LplT of Escherichia coli O81 (strain ED1a).